A 207-amino-acid polypeptide reads, in one-letter code: ATP synthase subunit 5, mitochondrial (207 aa).

This sequence belongs to the ATPase delta chain family. F-type ATPases have 2 components, CF(1) - the catalytic core - and CF(0) - the membrane proton channel. CF(1) has five subunits: alpha(3), beta(3), gamma(1), delta(1), epsilon(1). CF(0) has three main subunits: a, b and c.

Its subcellular location is the mitochondrion. The protein localises to the mitochondrion inner membrane. Mitochondrial membrane ATP synthase (F(1)F(0) ATP synthase or Complex V) produces ATP from ADP in the presence of a proton gradient across the membrane which is generated by electron transport complexes of the respiratory chain. F-type ATPases consist of two structural domains, F(1) - containing the extramembraneous catalytic core and F(0) - containing the membrane proton channel, linked together by a central stalk and a peripheral stalk. During catalysis, ATP synthesis in the catalytic domain of F(1) is coupled via a rotary mechanism of the central stalk subunits to proton translocation. Part of the complex F(0) domain and the peripheric stalk, which acts as a stator to hold the catalytic alpha(3)beta(3) subcomplex and subunit a/ATP6 static relative to the rotary elements. This Candida glabrata (strain ATCC 2001 / BCRC 20586 / JCM 3761 / NBRC 0622 / NRRL Y-65 / CBS 138) (Yeast) protein is ATP synthase subunit 5, mitochondrial (ATP5).